The sequence spans 283 residues: Acetyl-coenzyme A carboxylase carboxyl transferase subunit beta (283 aa).

Residues 27–283 enclose the CoA carboxyltransferase N-terminal domain; sequence VWVKCERCGE…LLDLHLRGEK (257 aa). Residues Cys31, Cys34, Cys50, and Cys53 each coordinate Zn(2+). Residues 31–53 form a C4-type zinc finger; sequence CERCGEILFKKELDKNYKVCLKC.

It belongs to the AccD/PCCB family. Acetyl-CoA carboxylase is a heterohexamer composed of biotin carboxyl carrier protein (AccB), biotin carboxylase (AccC) and two subunits each of ACCase subunit alpha (AccA) and ACCase subunit beta (AccD). It depends on Zn(2+) as a cofactor.

Its subcellular location is the cytoplasm. It carries out the reaction N(6)-carboxybiotinyl-L-lysyl-[protein] + acetyl-CoA = N(6)-biotinyl-L-lysyl-[protein] + malonyl-CoA. The protein operates within lipid metabolism; malonyl-CoA biosynthesis; malonyl-CoA from acetyl-CoA: step 1/1. Functionally, component of the acetyl coenzyme A carboxylase (ACC) complex. Biotin carboxylase (BC) catalyzes the carboxylation of biotin on its carrier protein (BCCP) and then the CO(2) group is transferred by the transcarboxylase to acetyl-CoA to form malonyl-CoA. The polypeptide is Acetyl-coenzyme A carboxylase carboxyl transferase subunit beta (Pelotomaculum thermopropionicum (strain DSM 13744 / JCM 10971 / SI)).